The following is a 95-amino-acid chain: MKIRPLGDRVVIKRLEAEETTKSGIVLPSSAKEKPQMAEVVAVGPGGVVDGKEIQMQVKTGDKVFFSKYSGTEIKVDNEELLILRQDDILGIVEE.

The protein belongs to the GroES chaperonin family. Heptamer of 7 subunits arranged in a ring. Interacts with the chaperonin GroEL.

The protein localises to the cytoplasm. Its function is as follows. Together with the chaperonin GroEL, plays an essential role in assisting protein folding. The GroEL-GroES system forms a nano-cage that allows encapsulation of the non-native substrate proteins and provides a physical environment optimized to promote and accelerate protein folding. GroES binds to the apical surface of the GroEL ring, thereby capping the opening of the GroEL channel. This is Co-chaperonin GroES from Clostridium acetobutylicum (strain ATCC 824 / DSM 792 / JCM 1419 / IAM 19013 / LMG 5710 / NBRC 13948 / NRRL B-527 / VKM B-1787 / 2291 / W).